The primary structure comprises 134 residues: Protein NrdI (134 aa).

It belongs to the NrdI family.

In terms of biological role, probably involved in ribonucleotide reductase function. The chain is Protein NrdI from Rhizobium etli (strain CIAT 652).